Consider the following 429-residue polypeptide: MAKIVDIKGREVLDSRGNPTVEADVLLDNGIIGSACAPSGASTGSREALELRDGDKSRYLGKGVLKAVANINGPIRDLLLGKDPIDQKALDQAMIKLDGTENKATLGANAILAVSLAAAKAAAQDQDLPLYAHIANLNGTPGVYSMPVPMMNIINGGEHADNNVDIQEFMVQPVGAKSFSEGLRMGTEIFHHLKAVLKARGLNTAVGDEGGFAPNLASNEDALKVISEAVANAGYTLGTDVTLALDCAASEFYEDGKYNLSGEGQVFTAEGFAEYLKGLTQRYPIISIEDGLDESDWAGWKILTDKIGEKVQLVGDDLFVTNTKILKEGIDKKIANSILIKFNQIGTLTETLEAIQMAKAAGYTAVISHRSGETEDSTIADLAVGTSAGQIKTGSLCRSDRVSKYNQLLRIEEQLNGKAKYNGRGEFRG.

Q167 serves as a coordination point for (2R)-2-phosphoglycerate. Catalysis depends on E209, which acts as the Proton donor. Residues D246, E289, and D316 each coordinate Mg(2+). The (2R)-2-phosphoglycerate site is built by K341, R370, S371, and K392. Catalysis depends on K341, which acts as the Proton acceptor.

The protein belongs to the enolase family. Component of the RNA degradosome, a multiprotein complex involved in RNA processing and mRNA degradation. Mg(2+) serves as cofactor.

Its subcellular location is the cytoplasm. It is found in the secreted. The protein localises to the cell surface. The catalysed reaction is (2R)-2-phosphoglycerate = phosphoenolpyruvate + H2O. It participates in carbohydrate degradation; glycolysis; pyruvate from D-glyceraldehyde 3-phosphate: step 4/5. Catalyzes the reversible conversion of 2-phosphoglycerate (2-PG) into phosphoenolpyruvate (PEP). It is essential for the degradation of carbohydrates via glycolysis. This chain is Enolase, found in Pseudomonas fluorescens (strain ATCC BAA-477 / NRRL B-23932 / Pf-5).